Reading from the N-terminus, the 2336-residue chain is RNA1 polyprotein (2336 aa).

The Cytoplasmic portion of the chain corresponds to 599 to 1210; it reads QVARIARNIF…YLKEHGLEVL (612 aa). Residues 797-964 enclose the SF3 helicase domain; sequence MKDLLDLQQR…PGVVFDPMDC (168 aa). 827 to 834 lines the ATP pocket; it reads GPSHCGKS. A helical membrane pass occupies residues 1211 to 1231; that stretch reads LLLAAMMILCVALYYFVGAFI. At 1232-1253 the chain is on the lumenal side; that stretch reads GVMGGALSMGAAMAGLKEVDMK. The 209-residue stretch at 1278–1486 folds into the Peptidase C3 domain; sequence YARGELDEEV…WADNLPNPCM (209 aa). Catalysis depends on for picornain 3C-like protease activity residues histidine 1320, glutamate 1358, and cysteine 1450. Residues 1771–1899 form the RdRp catalytic domain; the sequence is DRAINCDYSS…SCTDKIAIYF (129 aa).

This sequence belongs to the nepoviruses RNA1 polyprotein family. Post-translationally, specific enzymatic cleavages by picornain 3C-like protease in vivo yield mature proteins. Picornain 3C-like protease is autocatalytically processed. In terms of processing, VPg is uridylylated by the polymerase and is covalently linked to the 5'-end of genomic RNA. This uridylylated form acts as a nucleotide-peptide primer for the polymerase.

The protein resides in the host endoplasmic reticulum lumen. The protein localises to the host endoplasmic reticulum membrane. The catalysed reaction is RNA(n) + a ribonucleoside 5'-triphosphate = RNA(n+1) + diphosphate. Its function is as follows. Picornain 3C-like protease is a thiol protease that cleaves the P1 and P2 polyproteins. The sequence is that of RNA1 polyprotein from Cycas necrotic stunt virus (CNSV).